The primary structure comprises 463 residues: tRNA-2-methylthio-N(6)-dimethylallyladenosine synthase (463 aa).

In terms of domain architecture, MTTase N-terminal spans 19–135 (RSYWITTFGC…LENLLGKVDL (117 aa)). 6 residues coordinate [4Fe-4S] cluster: Cys28, Cys64, Cys98, Cys170, Cys174, and Cys177. The Radical SAM core domain occupies 156-393 (RESSICGWVN…NALVEKTARN (238 aa)). The 68-residue stretch at 396–463 (QRYINNIESV…RPFSLTGELC (68 aa)) folds into the TRAM domain.

Belongs to the methylthiotransferase family. MiaB subfamily. As to quaternary structure, monomer. It depends on [4Fe-4S] cluster as a cofactor.

Its subcellular location is the cytoplasm. The catalysed reaction is N(6)-dimethylallyladenosine(37) in tRNA + (sulfur carrier)-SH + AH2 + 2 S-adenosyl-L-methionine = 2-methylsulfanyl-N(6)-dimethylallyladenosine(37) in tRNA + (sulfur carrier)-H + 5'-deoxyadenosine + L-methionine + A + S-adenosyl-L-homocysteine + 2 H(+). In terms of biological role, catalyzes the methylthiolation of N6-(dimethylallyl)adenosine (i(6)A), leading to the formation of 2-methylthio-N6-(dimethylallyl)adenosine (ms(2)i(6)A) at position 37 in tRNAs that read codons beginning with uridine. The chain is tRNA-2-methylthio-N(6)-dimethylallyladenosine synthase from Prochlorococcus marinus (strain MIT 9312).